We begin with the raw amino-acid sequence, 858 residues long: Leucine--tRNA ligase (858 aa).

Positions 42-52 (PYPSGNLHMGH) match the 'HIGH' region motif. Polar residues predominate over residues 584 to 594 (NPNRSDSSRYI). Residues 584 to 611 (NPNRSDSSRYIPSNLVDPNDPKDPETGE) form a disordered region. Residues 619–623 (TMSKS) carry the 'KMSKS' region motif. Residue Lys622 coordinates ATP.

Belongs to the class-I aminoacyl-tRNA synthetase family.

The protein resides in the cytoplasm. It catalyses the reaction tRNA(Leu) + L-leucine + ATP = L-leucyl-tRNA(Leu) + AMP + diphosphate. This is Leucine--tRNA ligase from Cyanothece sp. (strain PCC 7425 / ATCC 29141).